The primary structure comprises 930 residues: Protocadherin gamma-A4 (930 aa).

Positions 1-27 (MAAPYKSDRRGLIWICIFLGSLCDIRA) are cleaved as a signal peptide. Cadherin domains follow at residues 28-132 (EQIR…APSF), 133-241 (GAQQ…APVF), 242-346 (TQPE…APEV), 347-451 (TVTS…PPTF), 452-561 (THAS…TPEI), and 569-682 (DGST…APID). The Extracellular portion of the chain corresponds to 28–691 (EQIRYSVPEE…DQEDSDITLY (664 aa)). Residues Asn-418 and Asn-544 are each glycosylated (N-linked (GlcNAc...) asparagine). Residues 692–712 (LVVAVAAVSCVFLAFVIVLLI) form a helical membrane-spanning segment. Residues 713–930 (HRLRRWHSTR…KKKSGKKEKK (218 aa)) are Cytoplasmic-facing. Disordered regions lie at residues 803–839 (SSLQQAPPNTDWRFSQAQRPGTSGSQNGDETGTWPNN) and 900–930 (ATLTNAAGKRDGKAPAGGNGNKKKSGKKEKK). Residues 920–930 (NKKKSGKKEKK) are compositionally biased toward basic residues.

It localises to the cell membrane. Functionally, potential calcium-dependent cell-adhesion protein. May be involved in the establishment and maintenance of specific neuronal connections in the brain. The sequence is that of Protocadherin gamma-A4 from Mus musculus (Mouse).